The sequence spans 539 residues: MYSNEEPWEGGYDEYGYEMGMPEDGMYDRGYFPMHEDVKKFLMYFCTVIKDGVVYEIQNLYENTFPKLSEQHFEKKAWPSEEEVAHLVDNDNLFLILYKELYYRHLHARIQGGPSLEQRLNSFYNYCNFFNYILPSKEPVQLELPDIWLWELIDEFVYQFQNFAQYRARLTDKTDEEMDMLLNNNSKVWNILCILNVLHSLVSMSKIKDQLEAAAAGKDPEAVAGEFGRHSFYKMLGYFSLVGLLRVHSLLGDYHQAIKVLEPIEIHKKSQYSHIPSCQISTSYYVGFAYMMMRRYSDAIRTFSSILLYIQRTKQLYSARSYQNDQINKQTDQMYHLLAICLVLHPQCIDESIQQVLREKNYHDNMYKMQCGDLDVFRNFFVFACPKFVSPVPPPPDAPIEDYVKDALEHQINVFMDEVKQQQELPTIRSYLKLYTTLPIMKLASFMDRKPQDEVDEQKLENLLTRLLCFKHKMKNVVWTKGSSGLEGKFQSGSELDFYIDKDMIHIADTKVSHRYGDFFIRKVMKFEDLNRRLHAIKG.

In terms of domain architecture, PCI spans 302 to 514; it reads TFSSILLYIQ…IHIADTKVSH (213 aa).

The protein belongs to the eIF-3 subunit L family. Component of the eukaryotic translation initiation factor 3 (eIF-3) complex.

It is found in the cytoplasm. Component of the eukaryotic translation initiation factor 3 (eIF-3) complex, which is involved in protein synthesis of a specialized repertoire of mRNAs and, together with other initiation factors, stimulates binding of mRNA and methionyl-tRNAi to the 40S ribosome. The eIF-3 complex specifically targets and initiates translation of a subset of mRNAs involved in cell proliferation. The protein is Eukaryotic translation initiation factor 3 subunit L of Anopheles gambiae (African malaria mosquito).